Here is a 301-residue protein sequence, read N- to C-terminus: Protein FdhE homolog (301 aa).

It belongs to the FdhE family.

The protein resides in the cytoplasm. Necessary for formate dehydrogenase activity. This chain is Protein FdhE homolog, found in Shewanella baltica (strain OS223).